A 206-amino-acid polypeptide reads, in one-letter code: Probable NAD(+) phosphorylase Rv3189 (206 aa).

It belongs to the MbcT/ParT/Res family. In terms of assembly, forms a heterotetramer with cognate antitoxin Rv3188.

It catalyses the reaction phosphate + NAD(+) = ADP-alpha-D-ribose 1''-phosphate + nicotinamide + H(+). Its function is as follows. Probable toxic component of a type II toxin-antitoxin (TA) system. Degrades NAD(+) by phosphorolysis. Neutralized by its cognate antitoxin Rv3188. The protein is Probable NAD(+) phosphorylase Rv3189 of Mycobacterium tuberculosis (strain ATCC 25618 / H37Rv).